The primary structure comprises 327 residues: Ferrochelatase (327 aa).

Residues His187 and Glu265 each contribute to the Fe cation site.

The protein belongs to the ferrochelatase family.

The protein localises to the cytoplasm. It catalyses the reaction heme b + 2 H(+) = protoporphyrin IX + Fe(2+). Its pathway is porphyrin-containing compound metabolism; protoheme biosynthesis; protoheme from protoporphyrin-IX: step 1/1. Catalyzes the ferrous insertion into protoporphyrin IX. The sequence is that of Ferrochelatase from Chlamydia pneumoniae (Chlamydophila pneumoniae).